Here is a 158-residue protein sequence, read N- to C-terminus: Protein hunchback (158 aa).

The span at 18-34 (HNHHHHHHHGHHQHQQR) shows a compositional bias: basic residues. Disordered regions lie at residues 18-96 (HNHH…TTTA) and 118-158 (LTPP…KYMA). Positions 41 to 50 (ASSPHQSPLP) are enriched in polar residues. The span at 52 to 65 (LQLEQYLKQQQQQP) shows a compositional bias: low complexity. The span at 139–158 (EPEKEHDLMSNSSEDMKYMA) shows a compositional bias: basic and acidic residues.

Belongs to the hunchback C2H2-type zinc-finger protein family.

The protein localises to the nucleus. Gap class segmentation protein that controls development of head structures. This is Protein hunchback (hb) from Drosophila mimica (Fruit fly).